The chain runs to 509 residues: ATP synthase subunit alpha (509 aa).

169–176 (GDRQTGKT) contributes to the ATP binding site.

The protein belongs to the ATPase alpha/beta chains family. F-type ATPases have 2 components, CF(1) - the catalytic core - and CF(0) - the membrane proton channel. CF(1) has five subunits: alpha(3), beta(3), gamma(1), delta(1), epsilon(1). CF(0) has three main subunits: a(1), b(2) and c(9-12). The alpha and beta chains form an alternating ring which encloses part of the gamma chain. CF(1) is attached to CF(0) by a central stalk formed by the gamma and epsilon chains, while a peripheral stalk is formed by the delta and b chains.

It localises to the cell inner membrane. The enzyme catalyses ATP + H2O + 4 H(+)(in) = ADP + phosphate + 5 H(+)(out). In terms of biological role, produces ATP from ADP in the presence of a proton gradient across the membrane. The alpha chain is a regulatory subunit. This Methylobacterium nodulans (strain LMG 21967 / CNCM I-2342 / ORS 2060) protein is ATP synthase subunit alpha.